The chain runs to 267 residues: Translation initiation factor 2 subunit alpha (267 aa).

One can recognise an S1 motif domain in the interval 10–81 (GELVVGKVDD…SAQQIDLSLK (72 aa)).

It belongs to the eIF-2-alpha family. In terms of assembly, heterotrimer composed of an alpha, a beta and a gamma chain.

In terms of biological role, eIF-2 functions in the early steps of protein synthesis by forming a ternary complex with GTP and initiator tRNA. This Halobacterium salinarum (strain ATCC 29341 / DSM 671 / R1) protein is Translation initiation factor 2 subunit alpha.